We begin with the raw amino-acid sequence, 634 residues long: Putative peptidoglycan O-acetyltransferase YrhL (634 aa).

11 helical membrane-spanning segments follow: residues 10–30 (YIPGLDGLRAFAVLSVITYHL), 38–58 (GFIGVDIFFVLSGYLITSILL), 79–99 (RLLPAAYLMIFSTVVWVVLFD), 110–130 (AISSLFYMSNWWFIFHKLSYF), 145–165 (LAIEEQFYIIWPMFLVVGMYI), 172–192 (LAAVISLLVLCSAVMMSVLYE), 244–264 (FLAFCILVLCVYFTDEYEPFL), 270–290 (LFISVTAAILIACVCHPSSFL), 307–327 (YGIYLWHYPVIVLSTPVQEIG), 329–349 (PVFWHIVLKVIVTCILAELSY), and 385–405 (MSIGFIIFAILIFAGGLSGLA). Residues 413-481 (KWTYSSQETN…SQQLKKPADT (69 aa)) form a disordered region. Residues 414–429 (WTYSSQETNADTSQAS) are compositionally biased toward polar residues. Basic and acidic residues-rich tracts occupy residues 430 to 447 (GDKKNAAADKKHNPEQKT) and 455 to 470 (KENKDSGQETHKKKDT).

This sequence belongs to the acyltransferase 3 family.

It localises to the cell membrane. The chain is Putative peptidoglycan O-acetyltransferase YrhL (yrhL) from Bacillus subtilis (strain 168).